The following is a 176-amino-acid chain: Large ribosomal subunit protein uL6 (176 aa).

The protein belongs to the universal ribosomal protein uL6 family. Part of the 50S ribosomal subunit.

In terms of biological role, this protein binds to the 23S rRNA, and is important in its secondary structure. It is located near the subunit interface in the base of the L7/L12 stalk, and near the tRNA binding site of the peptidyltransferase center. This is Large ribosomal subunit protein uL6 from Burkholderia lata (strain ATCC 17760 / DSM 23089 / LMG 22485 / NCIMB 9086 / R18194 / 383).